Here is a 389-residue protein sequence, read N- to C-terminus: Putative DNA processing protein DprA (389 aa).

This sequence belongs to the DprA/Smf family.

May help load RecA onto ssDNA. The protein is Putative DNA processing protein DprA of Mycobacterium tuberculosis (strain CDC 1551 / Oshkosh).